Reading from the N-terminus, the 462-residue chain is Ribosomal protein uS12 methylthiotransferase RimO (462 aa).

Residues 10–125 enclose the MTTase N-terminal domain; that stretch reads PRIGMVSLGC…VLDAVHRNLP (116 aa). Positions 19, 55, 84, 160, 164, and 167 each coordinate [4Fe-4S] cluster. Positions 146–388 constitute a Radical SAM core domain; that stretch reads LTPRHYAYLK…AVAEALSSAK (243 aa). A TRAM domain is found at 390 to 462; the sequence is QRRVGATMQV…RGHDLLAQPI (73 aa).

Belongs to the methylthiotransferase family. RimO subfamily. The cofactor is [4Fe-4S] cluster.

The protein localises to the cytoplasm. It catalyses the reaction L-aspartate(89)-[ribosomal protein uS12]-hydrogen + (sulfur carrier)-SH + AH2 + 2 S-adenosyl-L-methionine = 3-methylsulfanyl-L-aspartate(89)-[ribosomal protein uS12]-hydrogen + (sulfur carrier)-H + 5'-deoxyadenosine + L-methionine + A + S-adenosyl-L-homocysteine + 2 H(+). Its function is as follows. Catalyzes the methylthiolation of an aspartic acid residue of ribosomal protein uS12. The sequence is that of Ribosomal protein uS12 methylthiotransferase RimO from Verminephrobacter eiseniae (strain EF01-2).